The following is a 158-amino-acid chain: Leptin-B (158 aa).

A signal peptide spans 1–19 (MYMPLALVYASFLTLPAST). A disulfide bond links Cys114 and Cys158.

The protein belongs to the leptin family. Highly expressed in the brain and eye. Expressed at low levels in muscle and skin.

It localises to the secreted. Its function is as follows. May function as part of a signaling pathway that acts to regulate the size of the body fat depot. The polypeptide is Leptin-B (Oryzias latipes (Japanese rice fish)).